The following is a 128-amino-acid chain: Large ribosomal subunit protein bL19 (128 aa).

This sequence belongs to the bacterial ribosomal protein bL19 family.

In terms of biological role, this protein is located at the 30S-50S ribosomal subunit interface and may play a role in the structure and function of the aminoacyl-tRNA binding site. The sequence is that of Large ribosomal subunit protein bL19 from Herminiimonas arsenicoxydans.